The primary structure comprises 169 residues: Group 2 truncated hemoglobin 3-2 (169 aa).

His-99 is a binding site for heme b.

Belongs to the truncated hemoglobin family. Group II subfamily. In terms of assembly, homodimer when ferric.

Its function is as follows. Hemoglobin-like protein that exhibits an unusual concentration-independent binding of O(2) and CO. Required for general plant development and during nodulation. May promote shoot organogenesis from root explants. The sequence is that of Group 2 truncated hemoglobin 3-2 from Medicago truncatula (Barrel medic).